Consider the following 307-residue polypeptide: MVKNKAFFGQIMEERDNPAFFKILRREDHSTEMMRMIPHHLIRSISDKSSSFKMVLRVPWGRSWQVKISKNPNFHYMEDRGWNQFVNDNGLGENEYLTFTHEANMCFNVTIFEADGTEMLRPRKTITSSSGRNKREERKSIYKDVKKEEEIESWSESSHPCHKTAESTSGRLTQKQELNLRKKEADKTEKSKTSKKKKVETVSNDSEAGTSSLIPEFKLTIKKSHLLFLGIPKKFVDMHMPTETTMFKIHYPRGKKSWDVTYVVTDVQSRFSGGWSRLAKELGLLVGDVCTFKLIKPTEMRVKVSKE.

The segment at residues 20-115 (FFKILRREDH…CFNVTIFEAD (96 aa)) is a DNA-binding region (TF-B3 1). Disordered stretches follow at residues 122 to 141 (PRKTITSSSGRNKREERKSI) and 151 to 209 (IESW…SEAG). Positions 166-177 (ESTSGRLTQKQE) are enriched in polar residues. Basic and acidic residues predominate over residues 178–192 (LNLRKKEADKTEKSK). A DNA-binding region (TF-B3 2) is located at residues 214 to 307 (IPEFKLTIKK…TEMRVKVSKE (94 aa)).

The protein localises to the nucleus. This chain is B3 domain-containing protein At5g18000, found in Arabidopsis thaliana (Mouse-ear cress).